The primary structure comprises 1138 residues: Solute carrier family 12 member 5 (1138 aa).

2 disordered regions span residues 1–62 (MSRR…KGRE) and 96–116 (QGSR…KPVQ). At 1–98 (MSRRFTVTSL…ANYTNLPQGS (98 aa)) the chain is on the cytoplasmic side. Residues 21-45 (PESRRHSVADPRRLPREDVKGDGNP) show a composition bias toward basic and acidic residues. The span at 46-55 (KESSPFINST) shows a compositional bias: polar residues. The residue at position 57 (threonine 57) is a Phosphothreonine. Residues 98–111 (SREHEEAENNEGGK) are compositionally biased toward basic and acidic residues. Residues 99–120 (REHEEAENNEGGKKKPVQAPRM) traverse the membrane as a discontinuously helical segment. Lysine 113 is a binding site for K(+). Over 121–129 (GTFMGVYLP) the chain is Extracellular. The chain crosses the membrane as a helical span at residues 130–151 (CLQNIFGVILFLRLTWVVGIAG). Over 152 to 174 (IMESFCMVFICCSCTMLTAISMS) the chain is Cytoplasmic. The chain crosses the membrane as a helical span at residues 175–203 (AIATNGVVPAGGSYYMISRSLGPEFGGAV). Residue alanine 184 coordinates chloride. Residues 204–229 (GLCFYLGTTFAGAMYILGTIEILLAY) are Extracellular-facing. 2 helical membrane passes run 230–250 (LFPA…AAML) and 251–276 (NNMR…KYVN). Residues 277 to 402 (KFALVFLGCV…ERRGMPSVGL (126 aa)) lie on the Extracellular side of the membrane. Residues cysteine 310 and cysteine 325 are joined by a disulfide bond. 4 N-linked (GlcNAc...) asparagine glycosylation sites follow: asparagine 314, asparagine 333, asparagine 351, and asparagine 362. A disulfide bond links cysteine 345 and cysteine 354. Residues 403–420 (ADGTPVDMDHPYVFSDMT) traverse the membrane as a helical segment. Methionine 410 lines the K(+) pocket. Tyrosine 414 and valine 415 together coordinate chloride. At 421-429 (SYFTLLVGI) the chain is on the cytoplasmic side. Residues 430 to 453 (YFPSVTGIMAGSNRSGDLRDAQKS) traverse the membrane as a helical segment. A K(+)-binding site is contributed by aspartate 446. Residues 454-485 (IPTGTILAIATTSAVYISSVVLFGACIEGVVL) are Extracellular-facing. Residues 486 to 513 (RDKFGEAVNGNLVVGTLAWPSPWVIVIG) traverse the membrane as a helical segment. Topologically, residues 514–534 (SFFSTCGAGLQSLTGAPRLLQ) are cytoplasmic. 2 helical membrane-spanning segments follow: residues 535–555 (AISR…KANG) and 556–578 (EPTW…ASLD). Glutamate 569 provides a ligand contact to chloride. At 579 to 592 (EVAPILSMFFLMCY) the chain is on the cytoplasmic side. 2 helical membrane passes run 593–615 (MFVN…PRFR) and 616–632 (YYHW…CLAL). At 633-1138 (MFICSWYYAL…GGREVITIYS (506 aa)) the chain is on the cytoplasmic side. A scissor helix region spans residues 667-681 (GIRGLSLSAARYALL). Residue threonine 929 is modified to Phosphothreonine; by OXSR1 and STK39. The tract at residues 943–1051 (HLTKNERERE…GPSPVSSEGI (109 aa)) is disordered. Basic and acidic residues predominate over residues 945 to 962 (TKNEREREIQSITDESRG). Over residues 982–994 (TACDNEEKPEEEV) the composition is skewed to acidic residues. The segment covering 1001–1012 (SAPSCPSSSPSP) has biased composition (low complexity). Basic and acidic residues predominate over residues 1019–1041 (ERETDPEVHLTWTKDKSVAEKNK). Residue threonine 1029 is modified to Phosphothreonine; by OXSR1 and STK39. A phosphoserine mark is found at serine 1044, serine 1047, and serine 1048.

This sequence belongs to the SLC12A transporter family. K/Cl co-transporter subfamily. As to quaternary structure, homodimer; adopts a domain-swap conformation at the scissor helices connecting the transmembrane domain and C-terminal domain. Heterodimer with K-Cl cotransporters SLC12A6 and SLC12A7. Interacts with AP2A1. In terms of processing, phosphorylated at Thr-929 and Thr-1029 by OXSR1/OSR1 and STK39/SPAK downstream of WNK kinases (WNK1, WNK2, WNK3 or WNK4), inhibiting the potassium-chloride cotransport activity. As to expression, expressed in brainstem, spinal cord and olfactory bulb of 17 dpc embryos. Expressed in all parts of the brain and spinal cord in postnatal day 14 mice. In terms of tissue distribution, expressed in brainstem and spinal cord of 17 dpc embryos. Expressed in all parts of the brain and spinal cord in postnatal day 14 mice.

It is found in the cell membrane. It localises to the cell projection. The protein localises to the dendrite. It catalyses the reaction K(+)(in) + chloride(in) = K(+)(out) + chloride(out). Inhibited following phosphorylation by OXSR1/OSR1 and STK39/SPAK: phosphorylation takes place downstream of WNK kinases (WNK1, WNK2, WNK3 or WNK4) in response to hyperosmotic stress and subsequent cell shrinkage. Functionally, mediates electroneutral potassium-chloride cotransport in mature neurons and is required for neuronal Cl(-) homeostasis. As major extruder of intracellular chloride, it establishes the low neuronal Cl(-) levels required for chloride influx after binding of GABA-A and glycine to their receptors, with subsequent hyperpolarization and neuronal inhibition. Involved in the regulation of dendritic spine formation and maturation. The chain is Solute carrier family 12 member 5 (Slc12a5) from Mus musculus (Mouse).